We begin with the raw amino-acid sequence, 346 residues long: Dihydroorotate dehydrogenase (quinone) (346 aa).

FMN contacts are provided by residues Ala-62–Lys-66 and Thr-86. Lys-66 lines the substrate pocket. Asn-111–Phe-115 contributes to the substrate binding site. Asn-142 and Asn-175 together coordinate FMN. Asn-175 lines the substrate pocket. Ser-178 (nucleophile) is an active-site residue. Asn-180 contacts substrate. Positions 211 and 239 each coordinate FMN. Asn-240 to Thr-241 contributes to the substrate binding site. FMN is bound by residues Gly-261, Gly-289, and Tyr-310–Thr-311.

This sequence belongs to the dihydroorotate dehydrogenase family. Type 2 subfamily. Monomer. It depends on FMN as a cofactor.

It is found in the cell membrane. The catalysed reaction is (S)-dihydroorotate + a quinone = orotate + a quinol. The protein operates within pyrimidine metabolism; UMP biosynthesis via de novo pathway; orotate from (S)-dihydroorotate (quinone route): step 1/1. Catalyzes the conversion of dihydroorotate to orotate with quinone as electron acceptor. This is Dihydroorotate dehydrogenase (quinone) from Thermus thermophilus (strain ATCC 27634 / DSM 579 / HB8).